Consider the following 97-residue polypeptide: Eotaxin (97 aa).

Residues Met1–Ala23 form the signal peptide. 2 disulfides stabilise this stretch: Cys32–Cys57 and Cys33–Cys73. O-linked (GalNAc...) threonine glycosylation is present at Thr94.

This sequence belongs to the intercrine beta (chemokine CC) family. Expressed constitutively in the thymus. Expression inducible in the lung (type I alveolar epithelial cells), intestine, heart, spleen, kidney.

The protein resides in the secreted. Its function is as follows. In response to the presence of allergens, this protein directly promotes the accumulation of eosinophils (a prominent feature of allergic inflammatory reactions), but not lymphocytes, macrophages or neutrophils. Binds to CCR3. The chain is Eotaxin (Ccl11) from Mus musculus (Mouse).